The following is a 592-amino-acid chain: Leucine-rich repeat and immunoglobulin-like domain-containing nogo receptor-interacting protein 3 (592 aa).

Residues 1 to 24 (MTCWLCVLSLPLLLLPAAPPPAGG) form the signal peptide. An LRRNT domain is found at 25 to 54 (CPARCECTVQTRAVACTRRRLTAVPDGIPA). Topologically, residues 25-531 (CPARCECTVQ…LDLTTILVST (507 aa)) are extracellular. LRR repeat units lie at residues 55–76 (ETRLLELSRNRIRCLNPGDLAA), 79–100 (ALEELDLSENAIAHVEPGAFAN), 103–124 (RLRVLRLRGNQLKLIPPGVFTR), 127–148 (NLTLLDLSENKLVILLDYTFQD), 151–172 (SLRRLEVGDNDLVFVSRRAFAG), 175–196 (ALEELTLERCNLTALSGESLGH), 207–228 (HLAIASLEDQNFRRLPGLLHLE), 247–268 (NLTSLSVTHTNITAVPAAALRH), 271–292 (HLTCLNLSHNPISTVPRGSFRD), 295–316 (RLRELHLAGALLAVVEPQAFLG), and 319–340 (QIRLLNLSNNLLSTLEESTFHS). Asparagine 127 carries an N-linked (GlcNAc...) asparagine glycan. Asparagine 185 carries N-linked (GlcNAc...) asparagine glycosylation. Asparagine 247, asparagine 257, and asparagine 276 each carry an N-linked (GlcNAc...) asparagine glycan. The N-linked (GlcNAc...) asparagine glycan is linked to asparagine 324. In terms of domain architecture, LRRCT spans 352 to 406 (NPLACDCRLLWIVQRRKTLNFDGRLPACATPAEVRGDALRNLPDSVLFEYFVCRK). The Ig-like C2-type domain occupies 407–496 (PKIRERRLQR…GNDTYFATLT (90 aa)). Cysteine 429 and cysteine 480 are joined by a disulfide. N-linked (GlcNAc...) asparagine glycans are attached at residues asparagine 488 and asparagine 512. A helical membrane pass occupies residues 532–552 (AMGCITFLGVVLFCFVLLFVW). At 553-592 (SRGRGQHKNNFSVEYSFRKVDGPAAAAGQGGARKFNMKMI) the chain is on the cytoplasmic side.

It localises to the membrane. This Homo sapiens (Human) protein is Leucine-rich repeat and immunoglobulin-like domain-containing nogo receptor-interacting protein 3 (LINGO3).